A 478-amino-acid polypeptide reads, in one-letter code: Glycogen synthase (478 aa).

ADP-alpha-D-glucose is bound at residue K15.

It belongs to the glycosyltransferase 1 family. Bacterial/plant glycogen synthase subfamily.

It catalyses the reaction [(1-&gt;4)-alpha-D-glucosyl](n) + ADP-alpha-D-glucose = [(1-&gt;4)-alpha-D-glucosyl](n+1) + ADP + H(+). The protein operates within glycan biosynthesis; glycogen biosynthesis. Functionally, synthesizes alpha-1,4-glucan chains using ADP-glucose. This Clostridium botulinum (strain Eklund 17B / Type B) protein is Glycogen synthase.